We begin with the raw amino-acid sequence, 425 residues long: MTLIEDARKGVVTDFVKKAAEYEGIEAEKLIRLISHGYVVLPKNVRREEVQPRAIGMLTSTKVNANVGTSADYINVEEEVEKAIIAQKAGADAVMDLSSGGDLDAIRKRIMEVVEVPFGTVPIYQAARDCHRVVDMDEDDFFRVVEKHAKDGVDFMTIHAGVNWVSVERLRRSKRLLGVVSRGGAITIGWMLHNEKENPYYKDFDYLLEILKEYDVTISLGDAYRPGCIHDAGDRAKYTEFIMLGELVEKCREKGVQCMVEGPGHVPLDQIETSVRAMKSVTDNAPLYLLGPLVTDIAAGYDHIAAAIGAAIAGMAGADFICYVTPSEHLALPTVEDVREGVIAAKIAAHAIDLIKEGQRERARQRDYEMSLARKNLDWERQFELSIDPEKAREIYSRRKSESEACSMCGDLCAIKLVKEAFERD.

Residues Asn-66, Met-95, Tyr-124, His-159, 181-183, 222-225, and Glu-261 each bind substrate; these read SRG and DAYR. A Zn(2+)-binding site is contributed by His-265. Tyr-288 serves as a coordination point for substrate. His-329 provides a ligand contact to Zn(2+). 3 residues coordinate [4Fe-4S] cluster: Cys-406, Cys-409, and Cys-413.

Belongs to the ThiC family. Requires [4Fe-4S] cluster as cofactor.

It carries out the reaction 5-amino-1-(5-phospho-beta-D-ribosyl)imidazole + S-adenosyl-L-methionine = 4-amino-2-methyl-5-(phosphooxymethyl)pyrimidine + CO + 5'-deoxyadenosine + formate + L-methionine + 3 H(+). It functions in the pathway cofactor biosynthesis; thiamine diphosphate biosynthesis. Catalyzes the synthesis of the hydroxymethylpyrimidine phosphate (HMP-P) moiety of thiamine from aminoimidazole ribotide (AIR) in a radical S-adenosyl-L-methionine (SAM)-dependent reaction. The protein is Phosphomethylpyrimidine synthase of Archaeoglobus fulgidus (strain ATCC 49558 / DSM 4304 / JCM 9628 / NBRC 100126 / VC-16).